Reading from the N-terminus, the 570-residue chain is Sulfite reductase [NADPH] hemoprotein beta-component (570 aa).

Residues cysteine 434, cysteine 440, cysteine 479, and cysteine 483 each contribute to the [4Fe-4S] cluster site. Cysteine 483 provides a ligand contact to siroheme.

This sequence belongs to the nitrite and sulfite reductase 4Fe-4S domain family. Alpha(8)-beta(8). The alpha component is a flavoprotein, the beta component is a hemoprotein. Siroheme is required as a cofactor. Requires [4Fe-4S] cluster as cofactor.

The catalysed reaction is hydrogen sulfide + 3 NADP(+) + 3 H2O = sulfite + 3 NADPH + 4 H(+). Its pathway is sulfur metabolism; hydrogen sulfide biosynthesis; hydrogen sulfide from sulfite (NADPH route): step 1/1. Functionally, component of the sulfite reductase complex that catalyzes the 6-electron reduction of sulfite to sulfide. This is one of several activities required for the biosynthesis of L-cysteine from sulfate. This Escherichia coli (strain K12) protein is Sulfite reductase [NADPH] hemoprotein beta-component (cysI).